A 210-amino-acid chain; its full sequence is Protein RFS1 (210 aa).

The region spanning 4 to 203 (VAILIYSVDD…RVHQLQGKAF (200 aa)) is the Flavodoxin-like domain.

The protein belongs to the WrbA family.

It localises to the cytoplasm. The protein localises to the membrane raft. The polypeptide is Protein RFS1 (RFS1) (Saccharomyces cerevisiae (strain ATCC 204508 / S288c) (Baker's yeast)).